The chain runs to 162 residues: RNA pyrophosphohydrolase (162 aa).

A Nudix hydrolase domain is found at 11-155 (PYRPCVGIVL…KRAVYEEVVA (145 aa)). The Nudix box motif lies at 45–66 (GGIDEGEKPREAALRELWEETG).

This sequence belongs to the Nudix hydrolase family. RppH subfamily. A divalent metal cation is required as a cofactor.

Functionally, accelerates the degradation of transcripts by removing pyrophosphate from the 5'-end of triphosphorylated RNA, leading to a more labile monophosphorylated state that can stimulate subsequent ribonuclease cleavage. The sequence is that of RNA pyrophosphohydrolase from Cereibacter sphaeroides (strain ATCC 17023 / DSM 158 / JCM 6121 / CCUG 31486 / LMG 2827 / NBRC 12203 / NCIMB 8253 / ATH 2.4.1.) (Rhodobacter sphaeroides).